A 461-amino-acid polypeptide reads, in one-letter code: tRNA modification GTPase MnmE (461 aa).

Residues lysine 32, glutamate 89, and lysine 128 each coordinate (6S)-5-formyl-5,6,7,8-tetrahydrofolate. In terms of domain architecture, TrmE-type G spans 224 to 387 (GHALSIVGKP…LSQKISEFFP (164 aa)). Asparagine 234 provides a ligand contact to K(+). Residues 234-239 (NAGKSS), 253-259 (SDIKGTT), and 278-281 (DTAG) contribute to the GTP site. Serine 238 is a binding site for Mg(2+). K(+) contacts are provided by serine 253, isoleucine 255, and threonine 258. Threonine 259 contributes to the Mg(2+) binding site. Lysine 461 contacts (6S)-5-formyl-5,6,7,8-tetrahydrofolate.

It belongs to the TRAFAC class TrmE-Era-EngA-EngB-Septin-like GTPase superfamily. TrmE GTPase family. In terms of assembly, homodimer. Heterotetramer of two MnmE and two MnmG subunits. K(+) serves as cofactor.

Its subcellular location is the cytoplasm. Its function is as follows. Exhibits a very high intrinsic GTPase hydrolysis rate. Involved in the addition of a carboxymethylaminomethyl (cmnm) group at the wobble position (U34) of certain tRNAs, forming tRNA-cmnm(5)s(2)U34. This chain is tRNA modification GTPase MnmE, found in Helicobacter pylori (strain J99 / ATCC 700824) (Campylobacter pylori J99).